The primary structure comprises 572 residues: Neuronal acetylcholine receptor subunit alpha-9-I (572 aa).

Residues 1–19 (MKTVVLLTWISCWIDVCTS) form the signal peptide. The Extracellular portion of the chain corresponds to 20-232 (AQGRYAQKLL…YTLHLKRRSL (213 aa)). The N-linked (GlcNAc...) asparagine glycan is linked to Asn51. Cys149 and Cys163 are joined by a disulfide. The N-linked (GlcNAc...) asparagine glycan is linked to Asn164. Cys213 and Cys214 form a disulfide bridge. The next 3 membrane-spanning stretches (helical) occupy residues 233–253 (FYIFNLLLPCFLISFLAPLGF), 263–283 (VSLGVTVLLALTVFQLMVAES), and 297–317 (YIATMTMITASTSLTIFIMNI). At 318–550 (HFCGAEAKPV…WKKVAKVMDR (233 aa)) the chain is on the cytoplasmic side. A disordered region spans residues 405–458 (GHLQNHHSTHQNHLDNCRYANGGHRDDHYSNRSNQNHHSNRSQTSKGEGGEEKR). The segment covering 435–447 (NRSNQNHHSNRSQ) has biased composition (low complexity). Residues 551–571 (FFMWIFFIMVFLMSILIIGKA) traverse the membrane as a helical segment.

This sequence belongs to the ligand-gated ion channel (TC 1.A.9) family. Acetylcholine receptor (TC 1.A.9.1) subfamily. Expressed in the liver, olfactory mucosa, pituitary gland, hair cells of the saccule and spleen.

It localises to the postsynaptic cell membrane. It is found in the cell membrane. The polypeptide is Neuronal acetylcholine receptor subunit alpha-9-I (nachra9) (Oncorhynchus mykiss (Rainbow trout)).